The chain runs to 454 residues: MKGEILHLHLGQAGTQLGNSAWELYLLEHGLGHDGRPDPSAKDVVDGGSYETFFTETSNGKYVPRSLFVDLDPSPIDEIRTGGYRQLFHPELLISGKEDAANNYARGHYTIGKEMVDNVIDRIRRVADNCHSLQGFLIFHSFGGGTGSGFGALLLERLSTEYGKKSKLEFAVYPAPRVSTAVVEPYNAVLSTHSTIENSDCTFLVDNEAVYDICRRNLDIPRPSYDHLNRLIAQVVSSITSSLRFDGALNVDLNEFQTNLVPYPRIHYPLISYAPVISASKSAHESFKVQELTFQCFEPNNQMVVCDPRNGKYMAVALLYRGDAVPRDCNAAIAALKAKSSFNLVEWCPTGFKLGINYQKPMAVPAAPGDGGLAPVDRSVSMLSNTTAIAEAWSRLDHKFDLMYSKRAFVHWYVGEGMEEGEFSEAREDLAALEKDYEEVAADSYEGDEGEAEY.

The GTP site is built by Gln-12, Asp-72, Ser-141, Gly-145, Thr-146, Thr-180, Asn-207, and Asn-229. Residue Asp-72 participates in Mg(2+) binding. Glu-255 is a catalytic residue.

This sequence belongs to the tubulin family. In terms of assembly, dimer of alpha and beta chains. A typical microtubule is a hollow water-filled tube with an outer diameter of 25 nm and an inner diameter of 15 nM. Alpha-beta heterodimers associate head-to-tail to form protofilaments running lengthwise along the microtubule wall with the beta-tubulin subunit facing the microtubule plus end conferring a structural polarity. Microtubules usually have 13 protofilaments but different protofilament numbers can be found in some organisms and specialized cells. Requires Mg(2+) as cofactor.

Its subcellular location is the cytoplasm. The protein localises to the cytoskeleton. The enzyme catalyses GTP + H2O = GDP + phosphate + H(+). Functionally, tubulin is the major constituent of microtubules, a cylinder consisting of laterally associated linear protofilaments composed of alpha- and beta-tubulin heterodimers. Microtubules grow by the addition of GTP-tubulin dimers to the microtubule end, where a stabilizing cap forms. Below the cap, tubulin dimers are in GDP-bound state, owing to GTPase activity of alpha-tubulin. The polypeptide is Tubulin alpha chain (TUB1) (Colletotrichum orbiculare (strain 104-T / ATCC 96160 / CBS 514.97 / LARS 414 / MAFF 240422) (Cucumber anthracnose fungus)).